The chain runs to 145 residues: Large ribosomal subunit protein bL17 (145 aa).

Belongs to the bacterial ribosomal protein bL17 family. Part of the 50S ribosomal subunit. Contacts protein L32.

This is Large ribosomal subunit protein bL17 from Francisella tularensis subsp. tularensis (strain FSC 198).